We begin with the raw amino-acid sequence, 121 residues long: Large ribosomal subunit protein bL12 (121 aa).

This sequence belongs to the bacterial ribosomal protein bL12 family. As to quaternary structure, homodimer. Part of the ribosomal stalk of the 50S ribosomal subunit. Forms a multimeric L10(L12)X complex, where L10 forms an elongated spine to which 2 to 4 L12 dimers bind in a sequential fashion. Binds GTP-bound translation factors.

Functionally, forms part of the ribosomal stalk which helps the ribosome interact with GTP-bound translation factors. Is thus essential for accurate translation. The protein is Large ribosomal subunit protein bL12 of Streptococcus agalactiae serotype V (strain ATCC BAA-611 / 2603 V/R).